A 317-amino-acid polypeptide reads, in one-letter code: Acetyl-coenzyme A carboxylase carboxyl transferase subunit alpha (317 aa).

Residues 40–293 (LEGRVRDAMV…ETVIGDALKE (254 aa)) enclose the CoA carboxyltransferase C-terminal domain.

Belongs to the AccA family. In terms of assembly, acetyl-CoA carboxylase is a heterohexamer composed of biotin carboxyl carrier protein (AccB), biotin carboxylase (AccC) and two subunits each of ACCase subunit alpha (AccA) and ACCase subunit beta (AccD).

It localises to the cytoplasm. The catalysed reaction is N(6)-carboxybiotinyl-L-lysyl-[protein] + acetyl-CoA = N(6)-biotinyl-L-lysyl-[protein] + malonyl-CoA. Its pathway is lipid metabolism; malonyl-CoA biosynthesis; malonyl-CoA from acetyl-CoA: step 1/1. Its function is as follows. Component of the acetyl coenzyme A carboxylase (ACC) complex. First, biotin carboxylase catalyzes the carboxylation of biotin on its carrier protein (BCCP) and then the CO(2) group is transferred by the carboxyltransferase to acetyl-CoA to form malonyl-CoA. This is Acetyl-coenzyme A carboxylase carboxyl transferase subunit alpha from Rhizobium meliloti (strain 1021) (Ensifer meliloti).